Reading from the N-terminus, the 199-residue chain is V-type ATP synthase subunit E (199 aa).

It belongs to the V-ATPase E subunit family.

Functionally, produces ATP from ADP in the presence of a proton gradient across the membrane. The protein is V-type ATP synthase subunit E of Clostridium botulinum (strain Hall / ATCC 3502 / NCTC 13319 / Type A).